A 188-amino-acid polypeptide reads, in one-letter code: Ribosome-recycling factor (188 aa).

This sequence belongs to the RRF family.

Its subcellular location is the cytoplasm. Its function is as follows. Responsible for the release of ribosomes from messenger RNA at the termination of protein biosynthesis. May increase the efficiency of translation by recycling ribosomes from one round of translation to another. This is Ribosome-recycling factor from Cereibacter sphaeroides (strain ATCC 17029 / ATH 2.4.9) (Rhodobacter sphaeroides).